The primary structure comprises 291 residues: ATP synthase gamma chain (291 aa).

Belongs to the ATPase gamma chain family. As to quaternary structure, F-type ATPases have 2 components, CF(1) - the catalytic core - and CF(0) - the membrane proton channel. CF(1) has five subunits: alpha(3), beta(3), gamma(1), delta(1), epsilon(1). CF(0) has three main subunits: a, b and c.

The protein resides in the cell membrane. In terms of biological role, produces ATP from ADP in the presence of a proton gradient across the membrane. The gamma chain is believed to be important in regulating ATPase activity and the flow of protons through the CF(0) complex. This is ATP synthase gamma chain from Lachnoclostridium phytofermentans (strain ATCC 700394 / DSM 18823 / ISDg) (Clostridium phytofermentans).